The sequence spans 295 residues: Bifunctional protein FolD (295 aa).

Residues glycine 166 to serine 168, serine 195, and isoleucine 236 each bind NADP(+).

The protein belongs to the tetrahydrofolate dehydrogenase/cyclohydrolase family. In terms of assembly, homodimer.

It catalyses the reaction (6R)-5,10-methylene-5,6,7,8-tetrahydrofolate + NADP(+) = (6R)-5,10-methenyltetrahydrofolate + NADPH. The enzyme catalyses (6R)-5,10-methenyltetrahydrofolate + H2O = (6R)-10-formyltetrahydrofolate + H(+). It participates in one-carbon metabolism; tetrahydrofolate interconversion. Functionally, catalyzes the oxidation of 5,10-methylenetetrahydrofolate to 5,10-methenyltetrahydrofolate and then the hydrolysis of 5,10-methenyltetrahydrofolate to 10-formyltetrahydrofolate. In Chlorobium luteolum (strain DSM 273 / BCRC 81028 / 2530) (Pelodictyon luteolum), this protein is Bifunctional protein FolD.